We begin with the raw amino-acid sequence, 90 residues long: Transcriptional repressor SdpR (90 aa).

One can recognise an HTH arsR-type domain in the interval 1–87 (MNNVFKAISD…WMLNFINKGD (87 aa)). Residues 39–62 (PSISHHLNILKQAEVISDHRKGQF) constitute a DNA-binding region (H-T-H motif).

Its subcellular location is the cytoplasm. Represses the transcription of the sdpIR operon and of several other operons that probably contribute to delaying commitment to sporulation. In Bacillus subtilis (strain 168), this protein is Transcriptional repressor SdpR (sdpR).